A 268-amino-acid chain; its full sequence is Tryptophan synthase alpha chain (268 aa).

Residues Glu-40 and Asp-51 each act as proton acceptor in the active site.

The protein belongs to the TrpA family. As to quaternary structure, tetramer of two alpha and two beta chains.

The enzyme catalyses (1S,2R)-1-C-(indol-3-yl)glycerol 3-phosphate + L-serine = D-glyceraldehyde 3-phosphate + L-tryptophan + H2O. The protein operates within amino-acid biosynthesis; L-tryptophan biosynthesis; L-tryptophan from chorismate: step 5/5. Its function is as follows. The alpha subunit is responsible for the aldol cleavage of indoleglycerol phosphate to indole and glyceraldehyde 3-phosphate. This chain is Tryptophan synthase alpha chain, found in Geobacillus thermodenitrificans (strain NG80-2).